The primary structure comprises 248 residues: Probable transcriptional regulatory protein P9303_05381 (248 aa).

It belongs to the TACO1 family.

It is found in the cytoplasm. This is Probable transcriptional regulatory protein P9303_05381 from Prochlorococcus marinus (strain MIT 9303).